The primary structure comprises 335 residues: Mitochondrial amidoxime reducing component 2 (335 aa).

A mitochondrion-targeting transit peptide spans 1-35 (MGASSSSALARLGLPAQARPRWLGVAVLGLAAVAL). Glycyl lysine isopeptide (Lys-Gly) (interchain with G-Cter in ubiquitin) cross-links involve residues Lys59, Lys138, and Lys144. An N6-acetyllysine; alternate modification is found at Lys156. Lys156 participates in a covalent cross-link: Glycyl lysine isopeptide (Lys-Gly) (interchain with G-Cter in ubiquitin); alternate. Residues Lys173, Lys187, Lys287, and Lys294 each participate in a glycyl lysine isopeptide (Lys-Gly) (interchain with G-Cter in ubiquitin) cross-link. One can recognise an MOSC domain in the interval 188-334 (GRTSRKLLPT…LRVGDPVYRM (147 aa)).

As to quaternary structure, component of a complex composed of cytochrome b5, NADH-cytochrome b5 reductase (CYB5R3) and MTARC2. It depends on Mo-molybdopterin as a cofactor. Ubiquitinated by PRKN during mitophagy, leading to its degradation and enhancement of mitophagy. Deubiquitinated by USP30.

Its subcellular location is the mitochondrion outer membrane. It is found in the peroxisome. It catalyses the reaction N(omega)-hydroxy-L-arginine + 2 Fe(II)-[cytochrome b5] + 2 H(+) = L-arginine + 2 Fe(III)-[cytochrome b5] + H2O. Functionally, catalyzes the reduction of N-oxygenated molecules, acting as a counterpart of cytochrome P450 and flavin-containing monooxygenases in metabolic cycles. As a component of prodrug-converting system, reduces a multitude of N-hydroxylated prodrugs particularly amidoximes, leading to increased drug bioavailability. May be involved in mitochondrial N(omega)-hydroxy-L-arginine (NOHA) reduction, regulating endogenous nitric oxide levels and biosynthesis. Postulated to cleave the N-OH bond of N-hydroxylated substrates in concert with electron transfer from NADH to cytochrome b5 reductase then to cytochrome b5, the ultimate electron donor that primes the active site for substrate reduction. This chain is Mitochondrial amidoxime reducing component 2 (MTARC2), found in Macaca fascicularis (Crab-eating macaque).